The sequence spans 189 residues: GTPase KRas (189 aa).

The residue at position 1 (M1) is an N-acetylmethionine. T2 carries the N-acetylthreonine; in GTPase KRas, N-terminally processed modification. Residues 10 to 18 (GAGGVGKSA), 29 to 35 (VDEYDPT), and 59 to 60 (AG) each bind GTP. The short motif at 32–40 (YDPTIEDSY) is the Effector region element. Position 104 is an N6-acetyllysine (K104). Position 116 to 119 (116 to 119 (NKCD)) interacts with GTP. The hypervariable region stretch occupies residues 166 to 185 (YRLKKISKEEKTPGCVKIKK). Residue K170 forms a Glycyl lysine isopeptide (Lys-Gly) (interchain with G-Cter in ubiquitin) linkage. C180 carries the S-palmitoyl cysteine lipid modification. Residues K182, K184, and K185 are each lipidated (N6-palmitoyl lysine). C186 is modified (cysteine methyl ester). The S-farnesyl cysteine moiety is linked to residue C186. Residues 187–189 (VIM) constitute a propeptide, removed in mature form.

It belongs to the small GTPase superfamily. Ras family. Interacts with PHLPP. Interacts (active GTP-bound form preferentially) with RGS14. Interacts (when farnesylated) with PDE6D; this promotes dissociation from the cell membrane. Interacts with SOS1. Interacts (when farnesylated) with GPR31. Interacts with RAP1GDS1. Interacts (active GTP-bound form) with both SHOC2 and PP1c (all isoforms) to form a tertiary complex; SHOC2 and PP1c preferably bind M-Ras/MRAS, but they also bind K-Ras/KRAS, N-Ras/NRAS and H-Ras/HRAS. Interacts (GTP-bound form) with MAPKAP1/SIN1; inhibiting K-Ras/KRAS activity. In terms of assembly, interacts (when farnesylated) with GPR31. Post-translationally, acetylation at Lys-104 prevents interaction with guanine nucleotide exchange factors (GEFs). Ubiquitinated by the BCR(LZTR1) E3 ubiquitin ligase complex at Lys-170 in a non-degradative manner, leading to inhibit Ras signaling by decreasing Ras association with membranes. In terms of processing, palmitoylated at Lys-182, Lys-184 and Lys-185. Lysine-depalmitoylation by SIRT2 promotes its localization to endomembranes in endocytic pathways.

It localises to the cell membrane. The protein localises to the endomembrane system. Its subcellular location is the cytoplasm. It is found in the cytosol. The catalysed reaction is GTP + H2O = GDP + phosphate + H(+). Alternates between an inactive form bound to GDP and an active form bound to GTP. Activated by a guanine nucleotide-exchange factor (GEF) and inactivated by a GTPase-activating protein (GAP). Interaction with SOS1 promotes exchange of bound GDP to GTP. In terms of biological role, ras proteins bind GDP/GTP and possess intrinsic GTPase activity. Plays an important role in the regulation of cell proliferation. Plays a role in promoting oncogenic events by inducing transcriptional silencing of tumor suppressor genes (TSGs) in colorectal cancer (CRC) cells in a ZNF304-dependent manner. This is GTPase KRas (Kras) from Rattus norvegicus (Rat).